The chain runs to 362 residues: Phosphoserine aminotransferase (362 aa).

Residue arginine 42 participates in L-glutamate binding. Pyridoxal 5'-phosphate is bound by residues 76–77 (AR), tryptophan 102, threonine 153, aspartate 174, and glutamine 197. Residue lysine 198 is modified to N6-(pyridoxal phosphate)lysine. A pyridoxal 5'-phosphate-binding site is contributed by 239–240 (NT).

Belongs to the class-V pyridoxal-phosphate-dependent aminotransferase family. SerC subfamily. Homodimer. Pyridoxal 5'-phosphate serves as cofactor.

The protein localises to the cytoplasm. The catalysed reaction is O-phospho-L-serine + 2-oxoglutarate = 3-phosphooxypyruvate + L-glutamate. It catalyses the reaction 4-(phosphooxy)-L-threonine + 2-oxoglutarate = (R)-3-hydroxy-2-oxo-4-phosphooxybutanoate + L-glutamate. The protein operates within amino-acid biosynthesis; L-serine biosynthesis; L-serine from 3-phospho-D-glycerate: step 2/3. It functions in the pathway cofactor biosynthesis; pyridoxine 5'-phosphate biosynthesis; pyridoxine 5'-phosphate from D-erythrose 4-phosphate: step 3/5. In terms of biological role, catalyzes the reversible conversion of 3-phosphohydroxypyruvate to phosphoserine and of 3-hydroxy-2-oxo-4-phosphonooxybutanoate to phosphohydroxythreonine. The sequence is that of Phosphoserine aminotransferase from Xenorhabdus nematophila (strain ATCC 19061 / DSM 3370 / CCUG 14189 / LMG 1036 / NCIMB 9965 / AN6).